Reading from the N-terminus, the 201-residue chain is Large ribosomal subunit protein uL4 (201 aa).

Residues 44–68 are disordered; that stretch reads KAQKTRSEVAGTTKKSKKQKGGGAR.

The protein belongs to the universal ribosomal protein uL4 family. In terms of assembly, part of the 50S ribosomal subunit.

Its function is as follows. One of the primary rRNA binding proteins, this protein initially binds near the 5'-end of the 23S rRNA. It is important during the early stages of 50S assembly. It makes multiple contacts with different domains of the 23S rRNA in the assembled 50S subunit and ribosome. In terms of biological role, forms part of the polypeptide exit tunnel. The protein is Large ribosomal subunit protein uL4 of Xanthomonas axonopodis pv. citri (strain 306).